The chain runs to 739 residues: G2 and S phase-expressed protein 1 (739 aa).

Basic and acidic residues predominate over residues 1–11 (MEGGGGRDEPS). Residues 1–20 (MEGGGGRDEPSACRAGDVNM) are disordered. Ser91 bears the Phosphoserine mark. Disordered regions lie at residues 116 to 136 (SRNQ…GVER), 149 to 306 (EKEK…AIPV), and 320 to 639 (PGST…GDAA). Basic and acidic residues predominate over residues 149-165 (EKEKEMKKSPTSLKRET). Ser157 is subject to Phosphoserine. The residue at position 159 (Thr159) is a Phosphothreonine. Residues Ser171, Ser187, Ser208, Ser247, and Ser262 each carry the phosphoserine modification. Residues 181 to 195 (PRLLASSPALPSSGA) show a composition bias toward low complexity. Residues 268–280 (IPAEKESHRDVLP) show a composition bias toward basic and acidic residues. Composition is skewed to low complexity over residues 284–294 (APGAVNVPAAG) and 330–342 (SSSG…ASSA). Ser331 carries the post-translational modification Phosphoserine. Polar residues predominate over residues 360-372 (PANSSRPLSNISK). Residues 411 to 424 (TAPPSASPTQPQTP) are compositionally biased toward low complexity. Composition is skewed to polar residues over residues 430-446 (WLNS…LNKT) and 455-470 (CLNS…TNQF). Phosphoserine is present on Ser480. Over residues 481-522 (PDSSTPKLSRAQRPQSCTSVGRVTVHSTPVRRSSGPAPQSLL) the composition is skewed to polar residues. Thr485 is subject to Phosphothreonine. 6 positions are modified to phosphoserine: Ser496, Ser499, Ser514, Ser520, Ser523, and Ser528. Thr532 carries the phosphothreonine modification. Residues Ser535 and Ser555 each carry the phosphoserine modification. Basic and acidic residues predominate over residues 577–590 (EPTRESNRKTDSRL). Residues Ser594 and Ser611 each carry the phosphoserine modification. Thr696 carries the post-translational modification Phosphothreonine. Residues Ser707, Ser717, Ser718, Ser724, and Ser734 each carry the phosphoserine modification.

In terms of processing, phosphorylated in mitosis.

The protein localises to the cytoplasm. The protein resides in the cytoskeleton. Its function is as follows. May be involved in p53-induced cell cycle arrest in G2/M phase by interfering with microtubule rearrangements that are required to enter mitosis. Overexpression delays G2/M phase progression. The chain is G2 and S phase-expressed protein 1 from Homo sapiens (Human).